The primary structure comprises 173 residues: Photosystem I assembly protein Ycf3 (173 aa).

TPR repeat units follow at residues 35–68 (AFVYYRDGMSAQADGEYAEALDNYYEALTLEEDP), 72–105 (SYILYNIGIIHASNGEHEKALEYYEEAIQLNPRM), and 120–153 (GEKAREDGQQAEAEALYDKAAEYWKQAIRLAPNN).

The protein belongs to the Ycf3 family.

The protein localises to the cellular thylakoid membrane. Its function is as follows. Essential for the assembly of the photosystem I (PSI) complex. May act as a chaperone-like factor to guide the assembly of the PSI subunits. The sequence is that of Photosystem I assembly protein Ycf3 from Microcystis aeruginosa (strain NIES-843 / IAM M-2473).